The following is a 539-amino-acid chain: GMP synthase [glutamine-hydrolyzing] (539 aa).

Residues K4–D202 enclose the Glutamine amidotransferase type-1 domain. C81 acts as the Nucleophile in catalysis. Residues H176 and E178 contribute to the active site. Residues W203–R395 form the GMPS ATP-PPase domain. S230–S236 provides a ligand contact to ATP.

As to quaternary structure, homodimer.

The enzyme catalyses XMP + L-glutamine + ATP + H2O = GMP + L-glutamate + AMP + diphosphate + 2 H(+). The protein operates within purine metabolism; GMP biosynthesis; GMP from XMP (L-Gln route): step 1/1. Catalyzes the synthesis of GMP from XMP. This chain is GMP synthase [glutamine-hydrolyzing], found in Burkholderia ambifaria (strain ATCC BAA-244 / DSM 16087 / CCUG 44356 / LMG 19182 / AMMD) (Burkholderia cepacia (strain AMMD)).